Here is a 520-residue protein sequence, read N- to C-terminus: Flavin-dependent halogenase radH (520 aa).

FAD is bound by residues Gly-14, Ala-17, and Glu-47. The chloride site is built by Ser-330 and Gly-331.

Belongs to the flavin-dependent halogenase family.

It participates in secondary metabolite biosynthesis. In terms of biological role, non-heme halogenase; part of the gene cluster that mediates the biosynthesis of radicicol, a resorcylic acid lactone (RAL) that irreversibly inhibits the HSP90 molecular chaperone, an important target for cancer chemotherapy. The cluster encodes only two apparent post-PKS enzymes, a cytochrome P450 monooxygenase (radP) and a non-heme halogenase (radH) that introduce the epoxide and the chlorine, respectively. If this cluster includes all the genes required for radicicol biosynthesis, the remaining structural features of radicicol are presumably generated by the PKSs rads1 and rads2. The C-2' ketone could arise if the R-PKS rads1 and NR-PKS rads2 each carry out four iterations, in contrast to the five iteration-three iteration split for the hypothemycin PKSs. The origin of the cis 5',6' double bond is not known. The radicicol R-PKS rads1 ER domain may catalyze either double bond isomerization or reduction in the third iteration. In Floropilus chiversii (Chaetomium chiversii), this protein is Flavin-dependent halogenase radH.